Consider the following 264-residue polypeptide: 2-C-methyl-D-erythritol 4-phosphate cytidylyltransferase (264 aa).

The segment at 234–264 (ARDPESAHPQSSVLASAFSGPGSRVSGPEEI) is disordered.

The protein belongs to the IspD/TarI cytidylyltransferase family. IspD subfamily.

It catalyses the reaction 2-C-methyl-D-erythritol 4-phosphate + CTP + H(+) = 4-CDP-2-C-methyl-D-erythritol + diphosphate. It functions in the pathway isoprenoid biosynthesis; isopentenyl diphosphate biosynthesis via DXP pathway; isopentenyl diphosphate from 1-deoxy-D-xylulose 5-phosphate: step 2/6. Catalyzes the formation of 4-diphosphocytidyl-2-C-methyl-D-erythritol from CTP and 2-C-methyl-D-erythritol 4-phosphate (MEP). This Xanthomonas euvesicatoria pv. vesicatoria (strain 85-10) (Xanthomonas campestris pv. vesicatoria) protein is 2-C-methyl-D-erythritol 4-phosphate cytidylyltransferase.